Consider the following 94-residue polypeptide: Acylphosphatase (94 aa).

An Acylphosphatase-like domain is found at 8–94 (RLTAWVHGRV…REQITGFHER (87 aa)). Active-site residues include Arg23 and Asn41.

The protein belongs to the acylphosphatase family.

The catalysed reaction is an acyl phosphate + H2O = a carboxylate + phosphate + H(+). This is Acylphosphatase (acyP) from Mycobacterium sp. (strain JLS).